A 285-amino-acid polypeptide reads, in one-letter code: Vesicle-associated membrane protein 725 (285 aa).

At 1–261 (MDRSVVPISL…MWFENMKIKL (261 aa)) the chain is on the cytoplasmic side. In terms of domain architecture, Longin spans 75-179 (FVARGTVILV…SLNREFGSKL (105 aa)). Residues 195–255 (KLAKVKAQVT…TKIRRKMWFE (61 aa)) form the v-SNARE coiled-coil homology domain. Residues 262–282 (IVLGIIITLILIIILSVCGGF) form a helical; Anchor for type IV membrane protein membrane-spanning segment. The Vesicular segment spans residues 283-285 (KCT).

This sequence belongs to the synaptobrevin family. As to expression, expressed in flowers, leaves, stems and roots.

The protein localises to the cell membrane. Its subcellular location is the early endosome membrane. In terms of biological role, involved in the targeting and/or fusion of transport vesicles to their target membrane. This chain is Vesicle-associated membrane protein 725, found in Arabidopsis thaliana (Mouse-ear cress).